A 243-amino-acid chain; its full sequence is Glucosamine-6-phosphate deaminase (243 aa).

Asp-67 serves as the catalytic Proton acceptor; for enolization step. Asn-137 serves as the catalytic For ring-opening step. Catalysis depends on His-139, which acts as the Proton acceptor; for ring-opening step. Glu-144 acts as the For ring-opening step in catalysis.

This sequence belongs to the glucosamine/galactosamine-6-phosphate isomerase family. NagB subfamily.

It catalyses the reaction alpha-D-glucosamine 6-phosphate + H2O = beta-D-fructose 6-phosphate + NH4(+). It functions in the pathway amino-sugar metabolism; N-acetylneuraminate degradation; D-fructose 6-phosphate from N-acetylneuraminate: step 5/5. Functionally, catalyzes the reversible isomerization-deamination of glucosamine 6-phosphate (GlcN6P) to form fructose 6-phosphate (Fru6P) and ammonium ion. The sequence is that of Glucosamine-6-phosphate deaminase from Staphylococcus epidermidis (strain ATCC 12228 / FDA PCI 1200).